Here is a 35-residue protein sequence, read N- to C-terminus: Tamulustoxin (35 aa).

Cystine bridges form between C2–C22, C7–C31, and C11–C33.

Expressed by the venom gland.

The protein resides in the secreted. In terms of biological role, blocks Kv1.6/KCNA6 potassium channels. In Hottentotta tamulus (Eastern Indian scorpion), this protein is Tamulustoxin.